A 375-amino-acid chain; its full sequence is Alanine racemase (375 aa).

Catalysis depends on lysine 40, which acts as the Proton acceptor; specific for D-alanine. An N6-(pyridoxal phosphate)lysine modification is found at lysine 40. Arginine 140 contributes to the substrate binding site. Tyrosine 268 serves as the catalytic Proton acceptor; specific for L-alanine. Methionine 315 contributes to the substrate binding site.

Belongs to the alanine racemase family. Pyridoxal 5'-phosphate serves as cofactor.

The catalysed reaction is L-alanine = D-alanine. It functions in the pathway amino-acid biosynthesis; D-alanine biosynthesis; D-alanine from L-alanine: step 1/1. In terms of biological role, catalyzes the interconversion of L-alanine and D-alanine. May also act on other amino acids. In Limosilactobacillus reuteri (strain DSM 20016) (Lactobacillus reuteri), this protein is Alanine racemase (alr).